We begin with the raw amino-acid sequence, 147 residues long: Molybdopterin synthase catalytic subunit 1 (147 aa).

Residues 43 to 45 (NVR), 109 to 110 (HR), lysine 125, and 132 to 134 (KKE) each bind substrate.

It belongs to the MoaE family. Heterotetramer of 2 MoaD subunits and 2 MoaE subunits. Also stable as homodimer. The enzyme changes between these two forms during catalysis.

It carries out the reaction 2 [molybdopterin-synthase sulfur-carrier protein]-C-terminal-Gly-aminoethanethioate + cyclic pyranopterin phosphate + H2O = molybdopterin + 2 [molybdopterin-synthase sulfur-carrier protein]-C-terminal Gly-Gly + 2 H(+). It participates in cofactor biosynthesis; molybdopterin biosynthesis. Functionally, converts molybdopterin precursor Z into molybdopterin. This requires the incorporation of two sulfur atoms into precursor Z to generate a dithiolene group. The sulfur is provided by MoaD. This is Molybdopterin synthase catalytic subunit 1 (moaE1) from Mycobacterium tuberculosis (strain ATCC 25618 / H37Rv).